The chain runs to 326 residues: Probable cell division protein WhiA (326 aa).

The H-T-H motif DNA-binding region spans 275–308 (SLDELGRLADPVMTKDAIAGRIRRLLAMADKRAL).

Belongs to the WhiA family.

Its function is as follows. Involved in cell division and chromosome segregation. The protein is Probable cell division protein WhiA of Pseudarthrobacter chlorophenolicus (strain ATCC 700700 / DSM 12829 / CIP 107037 / JCM 12360 / KCTC 9906 / NCIMB 13794 / A6) (Arthrobacter chlorophenolicus).